A 422-amino-acid polypeptide reads, in one-letter code: MYKFRIQGSDKPLSGEVTISGAKNAALPILFAALLAEEPVEVANVPKLRDVDTTIELLQRLGAKVSRNGSVHIDASEVNNFCAPYDLVKTMRASIWALGPLVARFGKGQVSLPGGCAIGARPVDLHIHGLEQLGATIKLEDGYVKAEVDGRLKGAHIVMDKVSVGATITVMCAATLAEGTTILENAAREPEIVDTAHFLNAIGAKVSGMGTDTITIEGVERLGGGYHEVVADRIETGTFLVAAAVSGGKVVCKNTKASLLESVLAKLEEAGAKVESGEDWISLDMTGRELKAVNIRTAPHPAFPTDMQAQFTLLNMMAKGPGIITETIFENRFMHIPELQRMGAHAEIEGNTAICGDTDGLSGAQVMATDLRASASLVIAGCIAKGETIVDRIYHIDRGYDKIEDKLTALGANIERVRSSEL.

23-24 provides a ligand contact to phosphoenolpyruvate; it reads KN. R92 provides a ligand contact to UDP-N-acetyl-alpha-D-glucosamine. C116 (proton donor) is an active-site residue. C116 is subject to 2-(S-cysteinyl)pyruvic acid O-phosphothioketal. UDP-N-acetyl-alpha-D-glucosamine contacts are provided by residues 121–125, 161–164, D306, and I328; these read RPVDL and KVSV.

The protein belongs to the EPSP synthase family. MurA subfamily.

It localises to the cytoplasm. It catalyses the reaction phosphoenolpyruvate + UDP-N-acetyl-alpha-D-glucosamine = UDP-N-acetyl-3-O-(1-carboxyvinyl)-alpha-D-glucosamine + phosphate. Its pathway is cell wall biogenesis; peptidoglycan biosynthesis. Functionally, cell wall formation. Adds enolpyruvyl to UDP-N-acetylglucosamine. The chain is UDP-N-acetylglucosamine 1-carboxyvinyltransferase from Aliivibrio salmonicida (strain LFI1238) (Vibrio salmonicida (strain LFI1238)).